The following is a 487-amino-acid chain: Signal recognition particle subunit SRP54 (487 aa).

The tract at residues 1–295 is G-domain; sequence MVLSQLGSSL…DAESFVRKLL (295 aa). GTP contacts are provided by residues 108-115, 190-194, and 248-251; these read GLQGAGKT, DTSGR, and TKLD. Residues 296–487 form an M-domain region; it reads GMGDLKGIAK…LGGTGKKGKK (192 aa).

This sequence belongs to the GTP-binding SRP family. SRP54 subfamily. As to quaternary structure, component of a signal recognition particle (SRP) complex that consists of a 7SL RNA molecule of 300 nucleotides and six protein subunits: SRP72, SRP68, SRP54, SRP19, SRP14 and SRP9.

It localises to the cytoplasm. The protein resides in the endoplasmic reticulum. The enzyme catalyses GTP + H2O = GDP + phosphate + H(+). Component of the signal recognition particle (SRP) complex, a ribonucleoprotein complex that mediates the cotranslational targeting of secretory and membrane proteins to the endoplasmic reticulum (ER). As part of the SRP complex, associates with the SRP receptor (SR) component SRPRA to target secretory proteins to the endoplasmic reticulum membrane. Binds to the signal sequence of presecretory proteins when they emerge from the ribosomes. Displays basal GTPase activity, and stimulates reciprocal GTPase activation of the SR subunit SRPRA. Forms a guanosine 5'-triphosphate (GTP)-dependent complex with the SR subunit SRPRA. SR compaction and GTPase mediated rearrangement of SR drive SRP-mediated cotranslational protein translocation into the ER. Requires the presence of SRP9/SRP14 and/or SRP19 to stably interact with RNA. In Entamoeba histolytica (strain ATCC 30459 / HM-1:IMSS / ABRM), this protein is Signal recognition particle subunit SRP54.